A 351-amino-acid polypeptide reads, in one-letter code: Uroporphyrinogen decarboxylase (351 aa).

Residues 25–29 (RQAGR), aspartate 74, tyrosine 151, serine 206, and histidine 325 each bind substrate.

Belongs to the uroporphyrinogen decarboxylase family. As to quaternary structure, homodimer.

The protein localises to the cytoplasm. It catalyses the reaction uroporphyrinogen III + 4 H(+) = coproporphyrinogen III + 4 CO2. The protein operates within porphyrin-containing compound metabolism; protoporphyrin-IX biosynthesis; coproporphyrinogen-III from 5-aminolevulinate: step 4/4. Its function is as follows. Catalyzes the decarboxylation of four acetate groups of uroporphyrinogen-III to yield coproporphyrinogen-III. The sequence is that of Uroporphyrinogen decarboxylase from Chlorobium phaeobacteroides (strain BS1).